The chain runs to 228 residues: Phosphoribosylformylglycinamidine synthase subunit PurQ (228 aa).

Positions 4 to 226 (AVVVFPGSNC…VNYWRETHVV (223 aa)) constitute a Glutamine amidotransferase type-1 domain. The Nucleophile role is filled by cysteine 86. Catalysis depends on residues histidine 195 and glutamate 197.

In terms of assembly, part of the FGAM synthase complex composed of 1 PurL, 1 PurQ and 2 PurS subunits.

The protein resides in the cytoplasm. It carries out the reaction N(2)-formyl-N(1)-(5-phospho-beta-D-ribosyl)glycinamide + L-glutamine + ATP + H2O = 2-formamido-N(1)-(5-O-phospho-beta-D-ribosyl)acetamidine + L-glutamate + ADP + phosphate + H(+). The enzyme catalyses L-glutamine + H2O = L-glutamate + NH4(+). Its pathway is purine metabolism; IMP biosynthesis via de novo pathway; 5-amino-1-(5-phospho-D-ribosyl)imidazole from N(2)-formyl-N(1)-(5-phospho-D-ribosyl)glycinamide: step 1/2. In terms of biological role, part of the phosphoribosylformylglycinamidine synthase complex involved in the purines biosynthetic pathway. Catalyzes the ATP-dependent conversion of formylglycinamide ribonucleotide (FGAR) and glutamine to yield formylglycinamidine ribonucleotide (FGAM) and glutamate. The FGAM synthase complex is composed of three subunits. PurQ produces an ammonia molecule by converting glutamine to glutamate. PurL transfers the ammonia molecule to FGAR to form FGAM in an ATP-dependent manner. PurS interacts with PurQ and PurL and is thought to assist in the transfer of the ammonia molecule from PurQ to PurL. This chain is Phosphoribosylformylglycinamidine synthase subunit PurQ, found in Geobacillus kaustophilus (strain HTA426).